Here is a 541-residue protein sequence, read N- to C-terminus: Berberine bridge enzyme-like 24 (541 aa).

The N-terminal stretch at 1–32 (MGNSKPLPTISCIIVSVLYFSFYCITPTSSSA) is a signal peptide. A disulfide bridge connects residues Cys-41 and Cys-105. An N-linked (GlcNAc...) asparagine glycan is attached at Asn-62. An FAD-binding PCMH-type domain is found at 83-259 (SMPKPGFIFR…LAWKIKLVPV (177 aa)). A cross-link (6-(S-cysteinyl)-8alpha-(pros-histidyl)-FAD (His-Cys)) is located at residues 120–184 (HDFEALSYVS…KIHGFPAGLC (65 aa)). N-linked (GlcNAc...) asparagine glycosylation is found at Asn-309, Asn-408, and Asn-435.

The protein belongs to the oxygen-dependent FAD-linked oxidoreductase family. It depends on FAD as a cofactor. In terms of processing, the FAD cofactor is bound via a bicovalent 6-S-cysteinyl, 8alpha-N1-histidyl FAD linkage.

Its subcellular location is the secreted. It localises to the cell wall. The sequence is that of Berberine bridge enzyme-like 24 from Arabidopsis thaliana (Mouse-ear cress).